A 320-amino-acid polypeptide reads, in one-letter code: TPR repeat-containing protein MJ0263 (320 aa).

TPR repeat units follow at residues 12 to 45, 46 to 79, 80 to 113, 114 to 147, 148 to 181, 182 to 215, 216 to 249, 250 to 283, and 289 to 320; these read ILKD…DKDN, PLVL…EGTS, LLSL…SKPC, YLSP…YPNL, TSIL…KKDD, AHAW…NENL, VHVY…FPND, VEAK…KNVK, and KSSI…DNNI.

The chain is TPR repeat-containing protein MJ0263 from Methanocaldococcus jannaschii (strain ATCC 43067 / DSM 2661 / JAL-1 / JCM 10045 / NBRC 100440) (Methanococcus jannaschii).